A 151-amino-acid polypeptide reads, in one-letter code: Small ribosomal subunit protein bS6 (151 aa).

The interval 94 to 151 is disordered; the sequence is EEHEQGPSAMMRKRDDDDRGERGERPRGPRPERGERGERGERGPRRPREDNIGEEGLY. The span at 105–144 shows a compositional bias: basic and acidic residues; that stretch reads RKRDDDDRGERGERPRGPRPERGERGERGERGPRRPREDN.

Belongs to the bacterial ribosomal protein bS6 family.

Functionally, binds together with bS18 to 16S ribosomal RNA. This Beijerinckia indica subsp. indica (strain ATCC 9039 / DSM 1715 / NCIMB 8712) protein is Small ribosomal subunit protein bS6.